We begin with the raw amino-acid sequence, 1700 residues long: Probable serine/threonine-protein kinase ifkC (1700 aa).

The interval 1–25 is disordered; that stretch reads MPPKPKQKAKQPSQQPPPPPPPAAA. Residues 14–23 are compositionally biased toward pro residues; it reads QQPPPPPPPA. One can recognise an RWD domain in the interval 74–197; it reads MELEALQAIF…EIAKDFLNEN (124 aa). Residues 454–463 show a composition bias toward polar residues; it reads GLKKSPSTFE. Positions 454–488 are disordered; sequence GLKKSPSTFEYSGEGGGGGVGGGSSQKTINPHQQS. Gly residues predominate over residues 466–477; sequence GEGGGGGVGGGS. Residues 479 to 488 are compositionally biased toward polar residues; the sequence is QKTINPHQQS. The 534-residue stretch at 494-1027 folds into the Protein kinase domain; it reads FEEIQLLGRG…AQQLLQSELM (534 aa). ATP-binding positions include 500-508 and K523; that span reads LGRGGFGQV. Disordered stretches follow at residues 568–639 and 689–760; these read LTND…ENND and GNNT…SSSK. Residues 572–639 are compositionally biased toward acidic residues; it reads NSDDDDDDDD…SEFESEENND (68 aa). Positions 697-735 are enriched in low complexity; sequence SSNQHLQQQQQQNQSQQQKKQPQQNQSQQQKKLKNSNSK. Residues 736-752 show a composition bias toward basic residues; that stretch reads SKSKSKSKSKSKSKSNS. The active-site Proton acceptor is D822. 4 stretches are compositionally biased toward low complexity: residues 850–875, 1135–1158, 1230–1240, and 1509–1531; these read TSTL…SSNS, NNSS…NTNS, SSNGNSNNNNS, and NNSN…SYNN. Disordered stretches follow at residues 850–901, 1134–1160, 1216–1253, and 1507–1531; these read TSTL…EVEG, FNNS…NSVV, KHHH…SNTT, and NLNN…SYNN.

Belongs to the protein kinase superfamily. Ser/Thr protein kinase family. GCN2 subfamily.

The enzyme catalyses L-seryl-[protein] + ATP = O-phospho-L-seryl-[protein] + ADP + H(+). The catalysed reaction is L-threonyl-[protein] + ATP = O-phospho-L-threonyl-[protein] + ADP + H(+). The chain is Probable serine/threonine-protein kinase ifkC (ifkC) from Dictyostelium discoideum (Social amoeba).